A 346-amino-acid chain; its full sequence is Histidinol-phosphate aminotransferase (346 aa).

Lysine 206 is subject to N6-(pyridoxal phosphate)lysine.

Belongs to the class-II pyridoxal-phosphate-dependent aminotransferase family. Histidinol-phosphate aminotransferase subfamily. As to quaternary structure, homodimer. Requires pyridoxal 5'-phosphate as cofactor.

It carries out the reaction L-histidinol phosphate + 2-oxoglutarate = 3-(imidazol-4-yl)-2-oxopropyl phosphate + L-glutamate. It functions in the pathway amino-acid biosynthesis; L-histidine biosynthesis; L-histidine from 5-phospho-alpha-D-ribose 1-diphosphate: step 7/9. This is Histidinol-phosphate aminotransferase from Bacteroides thetaiotaomicron (strain ATCC 29148 / DSM 2079 / JCM 5827 / CCUG 10774 / NCTC 10582 / VPI-5482 / E50).